A 172-amino-acid chain; its full sequence is Shikimate kinase (172 aa).

An ATP-binding site is contributed by 14–19 (GAGKST). Serine 18 is a Mg(2+) binding site. Residues aspartate 36, arginine 60, and glycine 82 each contribute to the substrate site. Residue arginine 120 participates in ATP binding. Arginine 139 contacts substrate. Residue glutamine 156 coordinates ATP.

The protein belongs to the shikimate kinase family. As to quaternary structure, monomer. Requires Mg(2+) as cofactor.

It localises to the cytoplasm. It catalyses the reaction shikimate + ATP = 3-phosphoshikimate + ADP + H(+). It participates in metabolic intermediate biosynthesis; chorismate biosynthesis; chorismate from D-erythrose 4-phosphate and phosphoenolpyruvate: step 5/7. In terms of biological role, catalyzes the specific phosphorylation of the 3-hydroxyl group of shikimic acid using ATP as a cosubstrate. This Vibrio parahaemolyticus serotype O3:K6 (strain RIMD 2210633) protein is Shikimate kinase.